Reading from the N-terminus, the 762-residue chain is Putative BTB/POZ domain-containing protein L272 (762 aa).

Residues 16–86 (TDITIILKDE…FYGQKIKSHN (71 aa)) form the BTB domain. Over residues 390-410 (DLDNSNDLNDSNDLDDSDDSN) the composition is skewed to acidic residues. Disordered stretches follow at residues 390–411 (DLDN…DSND) and 532–556 (ISDN…NSDN). A compositionally biased stretch (low complexity) spans 532–543 (ISDNSDNLNNSD). A coiled-coil region spans residues 737–762 (FSENYCDELINRLNNALKKIEQKYPN).

The protein belongs to the mimivirus BTB/WD family.

This is Putative BTB/POZ domain-containing protein L272 from Acanthamoeba polyphaga (Amoeba).